The primary structure comprises 254 residues: PF03932 family protein CutC (254 aa).

This sequence belongs to the CutC family.

It is found in the cytoplasm. In Yersinia pestis bv. Antiqua (strain Angola), this protein is PF03932 family protein CutC.